Consider the following 304-residue polypeptide: Nod factor export ATP-binding protein I (304 aa).

An ABC transporter domain is found at 6 to 236 (IDLAGVKKSF…HIGCQVIEIF (231 aa)). ATP is bound at residue 38 to 45 (GPNGAGKS).

Belongs to the ABC transporter superfamily. Lipooligosaccharide exporter (TC 3.A.1.102) family. The complex is composed of two ATP-binding proteins (NodI) and two transmembrane proteins (NodJ).

It localises to the cell inner membrane. Part of the ABC transporter complex NodIJ involved in the export of the nodulation factors (Nod factors), the bacterial signal molecules that induce symbiosis and subsequent nodulation induction. Nod factors are LCO (lipo-chitin oligosaccharide), a modified beta-1,4-linked N-acetylglucosamine oligosaccharide. This subunit is responsible for energy coupling to the transport system. This is Nod factor export ATP-binding protein I from Rhizobium sp. (strain N33).